The primary structure comprises 528 residues: MGIANMTNKLDLLLQKPYVHHQLSVAELVEKVLQRNEGRLTHTGAVAVTTGKYTGRSPKDKYIVEEPSTKQTIDWGAVNQPMSPETFDKLYDKVLDYLMKKDELFVFKGFAGADPKYRLPIQVVNEFAWHNLFVHQLFIRPSAAELAAHEPQFTVICAPNFKADPKVDGTRSEAFIIISFERRTVLIGGTEYAGEMKKSIFSVMNYLLPEQGILPMHCSANVGQEGDVALFFGLSGTGKTTLSTDPNRRLIGDDEHGWSNRGIFNIEGGCYAKCINLSREKEPQIFDAIGFGAVLENVVLDDATRVPNYDDGTLTENTRAAYPLQAIKNIVDPSVAGHPSTIVFLTADAFGVLPPISKLTREQAMYHFLSGYTSKLAGTERGVTEPEATFSTCFGAPFLPRPAVEYAEMLGQKIAEHNVRVFLVNTGWTGGPYGVGSRMKLAYTRAMVQAAVEGELDNVETVQDPIFGLAIPSHVPGVPDDVLQPQNTWADKQAYEQKAKELAQKFRANFRKFAHIDPTIEKLGGPLV.

Substrate is bound by residues Arg56, Tyr192, and Lys198. Residues Lys198, His217, and Gly233–Thr241 each bind ATP. Lys198 and His217 together coordinate Mn(2+). Residue Asp254 coordinates Mn(2+). ATP is bound by residues Glu282, Arg319, and Thr444. Substrate is bound at residue Arg319.

The protein belongs to the phosphoenolpyruvate carboxykinase (ATP) family. Requires Mn(2+) as cofactor.

Its subcellular location is the cytoplasm. It carries out the reaction oxaloacetate + ATP = phosphoenolpyruvate + ADP + CO2. Its pathway is carbohydrate biosynthesis; gluconeogenesis. In terms of biological role, involved in the gluconeogenesis. Catalyzes the conversion of oxaloacetate (OAA) to phosphoenolpyruvate (PEP) through direct phosphoryl transfer between the nucleoside triphosphate and OAA. This is Phosphoenolpyruvate carboxykinase (ATP) from Geobacillus kaustophilus (strain HTA426).